Reading from the N-terminus, the 1351-residue chain is Serine-rich adhesin for platelets (1351 aa).

The signal sequence occupies residues 1–89; it reads MSKRQKEFHD…VNMLHDQQAF (89 aa). Positions 90-230 are serine-rich repeat region 1, SRR1; sequence AASDAPLTSE…KTSTTSTSTA (141 aa). The span at 100-111 shows a compositional bias: polar residues; sequence LNTQSETVGNQN. Disordered regions lie at residues 100-228 and 751-1323; these read LNTQ…TSTS and NSMS…GLLG. Composition is skewed to low complexity over residues 112 to 133 and 149 to 228; these read STTIEASTSTTDSTSVTKNSSS and NVTS…TSTS. Residues 231 to 751 are non-repeat region (NRR); the sequence is PIKLRTFSRL…TTFKYEVTRN (521 aa). Residues 752–1294 are compositionally biased toward low complexity; the sequence is SMSDSVSTSG…SQSTLSATSE (543 aa). Residues 752–1312 are serine-rich repeat region 1, SRR1; that stretch reads SMSDSVSTSG…AQSEKRLPDT (561 aa). An LPXTG sorting signal motif is present at residues 1309–1313; sequence LPDTG. The residue at position 1312 (Thr1312) is a Pentaglycyl murein peptidoglycan amidated threonine. Residues 1313–1351 constitute a propeptide, removed by sortase; the sequence is GDSIKQNGLLGGVMTLLVGLGLMKRKKKKDENDQDDSQA.

It belongs to the serine-rich repeat protein (SRRP) family. In terms of processing, proteolytically cleaved by a metalloprotease. Post-translationally, glycosylated. It is probable that most of the Ser residues in SSR1 and SSR2 are O-GlcNAcylated. Sequential glycosylation by sugar transferases are able to generate complex sugar polymorphisms.

It is found in the secreted. Its subcellular location is the cell wall. Mediates binding to human platelets, possibly through a receptor-ligand interaction. Probably associated with virulence in endovascular infection. In Staphylococcus aureus (strain MRSA252), this protein is Serine-rich adhesin for platelets (sasA).